Here is a 71-residue protein sequence, read N- to C-terminus: Small ribosomal subunit protein bS21 (71 aa).

Residues arginine 47 to tyrosine 71 form a disordered region. A compositionally biased stretch (basic and acidic residues) spans valine 60 to tyrosine 71.

Belongs to the bacterial ribosomal protein bS21 family.

The chain is Small ribosomal subunit protein bS21 from Histophilus somni (strain 129Pt) (Haemophilus somnus).